We begin with the raw amino-acid sequence, 526 residues long: MEKLLIICMLLISVLVATSQSQTDPETFLRCLVREGSNPQVFISDVTYIPSNSSFTTVLRRRIPNLRFDKPTTPKPIAIITPTTWSHISPVLACARLFPVQVRIRSGGHDFEGLSYTSTAPFFLIDLLNFKSVDVNLTEGTAWVDTGATLGELYYKIAEKSNVLGFPAGLCTTLGVGGHISGGGYGTMMRKYGLSVDNVVGSRIIDSNGNTYFDRMSMGEELFWAVRGGGAASFGIVMGYKIRLVPVPEKVTVFSVGKTVGEGAVDLIMKWQNFSHSTDRNLFVKLTLTLVNGAKPGEKKVLATFIGMNLGGFDKTLNVMNRDFPELKLKKTDCTEMRWIDSVLFWAGYPVGTPTSVLLNPTVTKKLFMKRKSDYVKRPVSRTGLGLILKKLVELEKVEMNWNPYGGRMGEIPSSRTPFPHRGGNLFNIEYIIDWSEAGDNVEKKYLALANEFYRFMTPYVSSNPREAFLNYRDIDIGSSGNSTYEEGKIYGAKYFKDNFERLVDIKTKFDEINFWRNEQSIPVRK.

The signal sequence occupies residues Met-1–Ser-21. Cysteines 31 and 94 form a disulfide. N-linked (GlcNAc...) asparagine glycosylation is found at Asn-52, Asn-136, Asn-273, and Asn-482. The 176-residue stretch at Thr-72–Val-247 folds into the FAD-binding PCMH-type domain. The 6-(S-cysteinyl)-8alpha-(pros-histidyl)-FAD (His-Cys) cross-link spans His-109–Cys-171.

The protein belongs to the oxygen-dependent FAD-linked oxidoreductase family. The cofactor is FAD. The FAD cofactor is bound via a bicovalent 6-S-cysteinyl, 8alpha-N1-histidyl FAD linkage.

Its subcellular location is the secreted. The protein resides in the cell wall. The chain is Berberine bridge enzyme-like 11 from Arabidopsis thaliana (Mouse-ear cress).